The sequence spans 72 residues: Translation initiation factor IF-1 (72 aa).

The region spanning 1–72 (MSKEELIEFE…TKGRITYRFK (72 aa)) is the S1-like domain.

Belongs to the IF-1 family. Component of the 30S ribosomal translation pre-initiation complex which assembles on the 30S ribosome in the order IF-2 and IF-3, IF-1 and N-formylmethionyl-tRNA(fMet); mRNA recruitment can occur at any time during PIC assembly.

The protein resides in the cytoplasm. Functionally, one of the essential components for the initiation of protein synthesis. Stabilizes the binding of IF-2 and IF-3 on the 30S subunit to which N-formylmethionyl-tRNA(fMet) subsequently binds. Helps modulate mRNA selection, yielding the 30S pre-initiation complex (PIC). Upon addition of the 50S ribosomal subunit IF-1, IF-2 and IF-3 are released leaving the mature 70S translation initiation complex. The sequence is that of Translation initiation factor IF-1 from Hyphomonas neptunium (strain ATCC 15444).